A 292-amino-acid chain; its full sequence is Glutamate racemase (292 aa).

Residues 28-29 (DS) and 60-61 (YG) contribute to the substrate site. Cysteine 91 serves as the catalytic Proton donor/acceptor. 92–93 (NT) is a substrate binding site. The active-site Proton donor/acceptor is the cysteine 200. Position 201–202 (201–202 (TH)) interacts with substrate.

The protein belongs to the aspartate/glutamate racemases family.

The enzyme catalyses L-glutamate = D-glutamate. It functions in the pathway cell wall biogenesis; peptidoglycan biosynthesis. Its function is as follows. Provides the (R)-glutamate required for cell wall biosynthesis. The polypeptide is Glutamate racemase (Trichormus variabilis (strain ATCC 29413 / PCC 7937) (Anabaena variabilis)).